We begin with the raw amino-acid sequence, 607 residues long: Glycerophosphodiester phosphodiesterase domain-containing protein 5 (607 aa).

Over 1–42 (MVRHQPLQYYEPQLCLSCLTGIYGCRWKRYQRSHDDTTPWER) the chain is Cytoplasmic. Intrachain disulfides connect C15–C18 and C25–C571. Residues 43–63 (LWFLLLVCTFSLTLTWLYFWW) form a helical membrane-spanning segment. At 64 to 89 (GVHNDYDEFNWYLYNRMGYWSDWSVP) the chain is on the extracellular side. Residues 90–110 (ILVTSAAAFTYIAGLLVLALC) traverse the membrane as a helical segment. Topologically, residues 111-125 (HIAVGQQLNLHWIHK) are cytoplasmic. A helical transmembrane segment spans residues 126 to 146 (MGLVVILASTVVAMSAVAQLW). The Extracellular portion of the chain corresponds to 147–160 (EDEWEVLLISLQGT). Residues 161 to 181 (APFLHIGALVAITALSWIVAG) traverse the membrane as a helical segment. Residues 182-192 (QFARAERSSSQ) are Cytoplasmic-facing. The helical transmembrane segment at 193-213 (LTILCTFFAVVFTFYLIPLTI) threads the bilayer. Topologically, residues 214–496 (SSPCIMEKKD…PLWIMPPDEY (283 aa)) are extracellular. The region spanning 228–485 (PALIGHRGAP…DNSHTLSRVP (258 aa)) is the GP-PDE domain. 5 N-linked (GlcNAc...) asparagine glycosylation sites follow: N301, N336, N352, N374, and N448. Residues 497–517 (CLMWVTADLISFSLIIGIFVL) form a helical membrane-spanning segment. The Cytoplasmic portion of the chain corresponds to 518-607 (QKWRLGGIRS…AKTVTEQSGH (90 aa)). Residues 582–607 (ANSTATPVGPRNAGSRAKTVTEQSGH) are disordered.

This sequence belongs to the glycerophosphoryl diester phosphodiesterase family. As to quaternary structure, interacts with PRDX1; forms a mixed-disulfide with PRDX1, leading to disrupt intramolecular disulfide bond between Cys-25 and Cys-571. Intramolecular disulfide bond between Cys-25 and Cys-571 is reduced by PRDX1. As to expression, detected in brain, lung, heart, kidney and testis.

The protein resides in the endomembrane system. It is found in the cytoplasm. It localises to the perinuclear region. The protein localises to the cell projection. Its subcellular location is the growth cone. The catalysed reaction is a 1,2-diacyl-sn-glycero-3-phospho-(1D-myo-inositol-4,5-bisphosphate) + H2O = 1D-myo-inositol 1,4,5-trisphosphate + a 1,2-diacyl-sn-glycerol + H(+). It catalyses the reaction sn-glycerol 3-phosphocholine + H2O = sn-glycerol 3-phosphate + choline + H(+). Inhibited by high level of NaCl or urea. Its function is as follows. Glycerophosphodiester phosphodiesterase that promotes neurite formation and drives spinal motor neuron differentiation. Mediates the cleavage of glycosylphosphatidylinositol (GPI) anchor of target proteins: removes the GPI-anchor of RECK, leading to release RECK from the plasma membrane. May contribute to the osmotic regulation of cellular glycerophosphocholine. The polypeptide is Glycerophosphodiester phosphodiesterase domain-containing protein 5 (Mus musculus (Mouse)).